The primary structure comprises 353 residues: Photosystem II D2 protein (353 aa).

At T2 the chain carries N-acetylthreonine. T2 carries the post-translational modification Phosphothreonine. The chain crosses the membrane as a helical span at residues 41–61 (CAYFALGGWFTGTTFVTSWYT). Residue H118 coordinates chlorophyll a. The chain crosses the membrane as a helical span at residues 125-141 (GFMLRQFELARSVQLRP). The pheophytin a site is built by Q130 and N143. Residues 153 to 166 (VFVSVFLIYPLGQS) traverse the membrane as a helical segment. H198 contributes to the chlorophyll a binding site. A helical membrane pass occupies residues 208–228 (AALLCAIHGATVENTLFEDGD). Positions 215 and 262 each coordinate a plastoquinone. H215 is a binding site for Fe cation. Fe cation is bound at residue H269. The helical transmembrane segment at 279-295 (GLWMSAIGVVGLALNLR) threads the bilayer.

Belongs to the reaction center PufL/M/PsbA/D family. As to quaternary structure, PSII is composed of 1 copy each of membrane proteins PsbA, PsbB, PsbC, PsbD, PsbE, PsbF, PsbH, PsbI, PsbJ, PsbK, PsbL, PsbM, PsbT, PsbX, PsbY, PsbZ, Psb30/Ycf12, at least 3 peripheral proteins of the oxygen-evolving complex and a large number of cofactors. It forms dimeric complexes. The D1/D2 heterodimer binds P680, chlorophylls that are the primary electron donor of PSII, and subsequent electron acceptors. It shares a non-heme iron and each subunit binds pheophytin, quinone, additional chlorophylls, carotenoids and lipids. There is also a Cl(-1) ion associated with D1 and D2, which is required for oxygen evolution. The PSII complex binds additional chlorophylls, carotenoids and specific lipids. is required as a cofactor.

It is found in the plastid. It localises to the chloroplast thylakoid membrane. It catalyses the reaction 2 a plastoquinone + 4 hnu + 2 H2O = 2 a plastoquinol + O2. Its function is as follows. Photosystem II (PSII) is a light-driven water:plastoquinone oxidoreductase that uses light energy to abstract electrons from H(2)O, generating O(2) and a proton gradient subsequently used for ATP formation. It consists of a core antenna complex that captures photons, and an electron transfer chain that converts photonic excitation into a charge separation. The D1/D2 (PsbA/PsbD) reaction center heterodimer binds P680, the primary electron donor of PSII as well as several subsequent electron acceptors. D2 is needed for assembly of a stable PSII complex. This Welwitschia mirabilis (Tree tumbo) protein is Photosystem II D2 protein.